A 283-amino-acid chain; its full sequence is RNase adapter protein RapZ (283 aa).

8 to 15 provides a ligand contact to ATP; it reads GRSGSGKS. Position 56–59 (56–59) interacts with GTP; the sequence is DVRN. An RNA-binding region spans residues 266–283; sequence RSRGKNVQSRHRTLEKRK.

The protein belongs to the RapZ-like family. RapZ subfamily. Homotrimer.

Functionally, modulates the synthesis of GlmS, by affecting the processing and stability of the regulatory small RNA GlmZ. When glucosamine-6-phosphate (GlcN6P) concentrations are high in the cell, RapZ binds GlmZ and targets it to cleavage by RNase E. Consequently, GlmZ is inactivated and unable to activate GlmS synthesis. Under low GlcN6P concentrations, RapZ is sequestered and inactivated by an other regulatory small RNA, GlmY, preventing GlmZ degradation and leading to synthesis of GlmS. In Photorhabdus laumondii subsp. laumondii (strain DSM 15139 / CIP 105565 / TT01) (Photorhabdus luminescens subsp. laumondii), this protein is RNase adapter protein RapZ.